The sequence spans 249 residues: ATP synthase subunit a (249 aa).

6 helical membrane passes run 26-46 (FTNV…FLYL), 84-104 (FFPF…IGLF), 114-134 (IIVT…YGFF), 143-163 (LFVP…IEII), 185-205 (ITLK…ALGI), and 208-228 (TVLP…VAFL).

Belongs to the ATPase A chain family. F-type ATPases have 2 components, CF(1) - the catalytic core - and CF(0) - the membrane proton channel. CF(1) has five subunits: alpha(3), beta(3), gamma(1), delta(1), epsilon(1). CF(0) has three main subunits: a(1), b(2) and c(9-12). The alpha and beta chains form an alternating ring which encloses part of the gamma chain. CF(1) is attached to CF(0) by a central stalk formed by the gamma and epsilon chains, while a peripheral stalk is formed by the delta and b chains.

The protein resides in the cell inner membrane. Functionally, key component of the proton channel; it plays a direct role in the translocation of protons across the membrane. The chain is ATP synthase subunit a from Brucella ovis (strain ATCC 25840 / 63/290 / NCTC 10512).